The sequence spans 464 residues: 3-isopropylmalate dehydratase large subunit (464 aa).

The [4Fe-4S] cluster site is built by Cys-345, Cys-405, and Cys-408.

This sequence belongs to the aconitase/IPM isomerase family. LeuC type 1 subfamily. As to quaternary structure, heterodimer of LeuC and LeuD. It depends on [4Fe-4S] cluster as a cofactor.

It catalyses the reaction (2R,3S)-3-isopropylmalate = (2S)-2-isopropylmalate. Its pathway is amino-acid biosynthesis; L-leucine biosynthesis; L-leucine from 3-methyl-2-oxobutanoate: step 2/4. Its function is as follows. Catalyzes the isomerization between 2-isopropylmalate and 3-isopropylmalate, via the formation of 2-isopropylmaleate. The chain is 3-isopropylmalate dehydratase large subunit from Flavobacterium johnsoniae (strain ATCC 17061 / DSM 2064 / JCM 8514 / BCRC 14874 / CCUG 350202 / NBRC 14942 / NCIMB 11054 / UW101) (Cytophaga johnsonae).